Consider the following 103-residue polypeptide: Small ribosomal subunit protein uS10 (103 aa).

The protein belongs to the universal ribosomal protein uS10 family. In terms of assembly, part of the 30S ribosomal subunit.

In terms of biological role, involved in the binding of tRNA to the ribosomes. This chain is Small ribosomal subunit protein uS10, found in Baumannia cicadellinicola subsp. Homalodisca coagulata.